The chain runs to 359 residues: Guanine nucleotide-binding protein alpha-4 subunit (359 aa).

Residue glycine 2 is the site of N-myristoyl glycine attachment. Cysteine 3 is lipidated: S-palmitoyl cysteine. The 329-residue stretch at 31 to 359 (GEIKLLLLGA…RNNLYLCGLY (329 aa)) folds into the G-alpha domain. The G1 motif stretch occupies residues 34–47 (KLLLLGAGESGKST). GTP contacts are provided by residues 39–46 (GAGESGKS), 178–184 (LRARVKS), 203–207 (DVGGQ), 272–275 (NKMD), and alanine 331. Serine 46 is a Mg(2+) binding site. The G2 motif stretch occupies residues 176–184 (DILRARVKS). Residues 199–208 (FKMFDVGGQR) are G3 motif. Residues 268–275 (ILFLNKMD) form a G4 motif region. Residues 329 to 334 (TCATDT) are G5 motif.

The protein belongs to the G-alpha family. G(i/o/t/z) subfamily. G proteins are composed of 3 units; alpha, beta and gamma. The alpha chain contains the guanine nucleotide binding site. Expressed in ASI neurons.

Its function is as follows. Guanine nucleotide-binding proteins (G proteins) are involved as modulators or transducers in various transmembrane signaling systems. Acts in concert with npr-15 to activate TGF-beta-like daf-7 secretion in the ASI neuron, thereby promoting larval development and inhibition of dauer diapause. This Caenorhabditis elegans protein is Guanine nucleotide-binding protein alpha-4 subunit (gpa-4).